The sequence spans 211 residues: ATP-dependent dethiobiotin synthetase BioD 2 (211 aa).

13–18 is an ATP binding site; that stretch reads DIGKTI. Threonine 17 provides a ligand contact to Mg(2+). Lysine 38 is an active-site residue. Substrate is bound at residue threonine 42. ATP is bound by residues aspartate 50, 115–118, and 175–176; these read EGAG and NT. Mg(2+) is bound by residues aspartate 50 and glutamate 115.

This sequence belongs to the dethiobiotin synthetase family. In terms of assembly, homodimer. It depends on Mg(2+) as a cofactor.

The protein resides in the cytoplasm. The enzyme catalyses (7R,8S)-7,8-diammoniononanoate + CO2 + ATP = (4R,5S)-dethiobiotin + ADP + phosphate + 3 H(+). It participates in cofactor biosynthesis; biotin biosynthesis; biotin from 7,8-diaminononanoate: step 1/2. Functionally, catalyzes a mechanistically unusual reaction, the ATP-dependent insertion of CO2 between the N7 and N8 nitrogen atoms of 7,8-diaminopelargonic acid (DAPA, also called 7,8-diammoniononanoate) to form a ureido ring. The polypeptide is ATP-dependent dethiobiotin synthetase BioD 2 (Haemophilus ducreyi (strain 35000HP / ATCC 700724)).